The following is a 105-amino-acid chain: Serine protease inhibitor Kazal-type 6 (105 aa).

A signal peptide spans 1 to 23 (MKVAGVFLLLSLALLCFFSGAFS). Gln-24 bears the Pyrrolidone carboxylic acid mark. The region spanning 49–105 (RLFQINCGEFRDPKVFCTRESDPLCGSDGQTYGNKCAFCKALEKSSGKINLKHRGKC) is the Kazal-like domain. 3 cysteine pairs are disulfide-bonded: Cys-55-Cys-87, Cys-65-Cys-84, and Cys-73-Cys-105.

Expressed in the upper epidermis and in skin appendages.

The protein localises to the secreted. Serine protease inhibitor selective for kallikreins. Efficiently inhibits KLK5 and human KLK2, KLK4, KLK5, KLK6, KLK7, KLK12, KLK13 and KLK14. Doesn't inhibit human KLK1 and KLK8. This Mus musculus (Mouse) protein is Serine protease inhibitor Kazal-type 6 (Spink6).